The primary structure comprises 290 residues: Bifunctional protein FolD (290 aa).

Residues 165–167 (GRG), S194, and I235 each bind NADP(+).

This sequence belongs to the tetrahydrofolate dehydrogenase/cyclohydrolase family. In terms of assembly, homodimer.

The enzyme catalyses (6R)-5,10-methylene-5,6,7,8-tetrahydrofolate + NADP(+) = (6R)-5,10-methenyltetrahydrofolate + NADPH. The catalysed reaction is (6R)-5,10-methenyltetrahydrofolate + H2O = (6R)-10-formyltetrahydrofolate + H(+). The protein operates within one-carbon metabolism; tetrahydrofolate interconversion. In terms of biological role, catalyzes the oxidation of 5,10-methylenetetrahydrofolate to 5,10-methenyltetrahydrofolate and then the hydrolysis of 5,10-methenyltetrahydrofolate to 10-formyltetrahydrofolate. The chain is Bifunctional protein FolD from Syntrophotalea carbinolica (strain DSM 2380 / NBRC 103641 / GraBd1) (Pelobacter carbinolicus).